Consider the following 193-residue polypeptide: Dephospho-CoA kinase (193 aa).

A DPCK domain is found at 5 to 193 (IIGLTGGIAS…KKVERFCETI (189 aa)). 13–18 (ASGKST) is an ATP binding site.

It belongs to the CoaE family.

It is found in the cytoplasm. It carries out the reaction 3'-dephospho-CoA + ATP = ADP + CoA + H(+). The protein operates within cofactor biosynthesis; coenzyme A biosynthesis; CoA from (R)-pantothenate: step 5/5. Functionally, catalyzes the phosphorylation of the 3'-hydroxyl group of dephosphocoenzyme A to form coenzyme A. The sequence is that of Dephospho-CoA kinase from Fusobacterium nucleatum subsp. nucleatum (strain ATCC 25586 / DSM 15643 / BCRC 10681 / CIP 101130 / JCM 8532 / KCTC 2640 / LMG 13131 / VPI 4355).